Reading from the N-terminus, the 930-residue chain is Kinesin-like protein KIN-7J (930 aa).

In terms of domain architecture, Kinesin motor spans 9-273 (KILVSVRVRP…TLGTVIRKLR (265 aa)). 95 to 102 (GQTSSGKT) contacts ATP. Disordered regions lie at residues 449–569 (LKNS…IGTD) and 655–686 (MQTK…SLKD). Low complexity predominate over residues 459-468 (SVEAQESQES). 2 stretches are compositionally biased toward basic and acidic residues: residues 473–482 (EQMKNEERKM) and 533–558 (AKLD…KDCN). Over residues 666–681 (TSSISFDSGSSTSIDT) the composition is skewed to low complexity. Lysine 805 participates in a covalent cross-link: Glycyl lysine isopeptide (Lys-Gly) (interchain with G-Cter in ubiquitin).

The protein belongs to the TRAFAC class myosin-kinesin ATPase superfamily. Kinesin family. KIN-7 subfamily.

This is Kinesin-like protein KIN-7J from Arabidopsis thaliana (Mouse-ear cress).